We begin with the raw amino-acid sequence, 533 residues long: Di/tripeptide-binding protein 4 (533 aa).

A signal peptide spans 1-25 (MLHPLLRHLPLALALALCAAGAAQA).

Belongs to the bacterial solute-binding protein 5 family. The complex is composed of two ATP-binding proteins (DppD and DppF), two transmembrane proteins (DppB and DppC) and a solute-binding protein (DppA4). Five orthologous SBPs (DppA1-A5) are present in P.aeruginosa, which increases the substrate specificity of the DppBCDF transporter.

Part of the ABC transporter DppABCDF involved in the uptake of various di/tripeptides. Prefers dipeptides with acidic residues at the C-terminal end. Efficiently uses tripeptides. The polypeptide is Di/tripeptide-binding protein 4 (Pseudomonas aeruginosa (strain UCBPP-PA14)).